The following is an 872-amino-acid chain: MKQLSSAQVRQMWLDFWATKGHSVEPSVSLVPVNDPTLLWINSGVATLKKYFDGTIIPENPRITNAQKAIRTNDIENVGKTARHHTMFEMLGNFSIGDYFRDEAITWAYELLTSPEWFDFPAEKLYMTYYPDDKDSYNRWIEVGVDPSHLIPIEDNFWEIGAGPSGPDTEIFFDRGEAFDPENIGLRLLAEDIENDRYIEIWNIVLSQFNADPAVPRSEYKELPHKNIDTGAGLERLVAVIQGAKTNFETDLFMPIIREVEKLSGKVYDQDGDNMSFKVIADHIRSLSFAIGDGALPGNEGRGYVLRRLLRRASMHGQKLGINEPFLYKLVPTVGKIMESYYPEVLEKRDFIEKIVKSEEESFARTLHSGQHFAQGIVADLKEKGQSVIAGQDVFKLYDTYGFPVELTEEIAEEAGMTVDREGFEAAMKEQQERARASAVKGGSMGMQNETLQNITVESVFNYNTSQLSSKLVAIVADNAEVGAVSEGTASLIFAETSFYAEMGGQVADYGQILDESGKIVATVTNVQKAPNGQALHTVEVLAPLALNQEYTLAIDSNRRHRVMKNHTATHLLHAALHNILGNHATQAGSLNEVEFLRFDFTHFQAVTAEELRAIEQQVNEKIWEALEVKTVETDIDTAKEMGAMALFGEKYGKEVRVVTIGDYSIELCGGTHVDNTSEIGLFKIVKEEGIGSGTRRILAVTGKEAFEAYREQEDALKAIAATLKAPQVKEVPHKVEGLQEQLRQLQKENAELKEKAAAAAAGDIFKDVKEVNGHRYIASQVSVSDAGALRTFADNWKQKDYSDLLVLVAAIGDKVNVLVASKTKDLHAGNLVKELAPIIDGRGGGKPDMAMAGGSNQPKIQELLDAVAGKL.

Zn(2+) is bound by residues H567, H571, C669, and H673.

The protein belongs to the class-II aminoacyl-tRNA synthetase family. It depends on Zn(2+) as a cofactor.

It is found in the cytoplasm. The enzyme catalyses tRNA(Ala) + L-alanine + ATP = L-alanyl-tRNA(Ala) + AMP + diphosphate. In terms of biological role, catalyzes the attachment of alanine to tRNA(Ala) in a two-step reaction: alanine is first activated by ATP to form Ala-AMP and then transferred to the acceptor end of tRNA(Ala). Also edits incorrectly charged Ser-tRNA(Ala) and Gly-tRNA(Ala) via its editing domain. The sequence is that of Alanine--tRNA ligase from Streptococcus pneumoniae serotype 2 (strain D39 / NCTC 7466).